The chain runs to 358 residues: Insulin gene enhancer protein isl-2b (358 aa).

2 LIM zinc-binding domains span residues 27–80 (CVGC…CKRD) and 89–143 (CAKC…RADH). A DNA-binding region (homeobox) is located at residues 191-250 (TTRVRTVLNEKQLHTLRTCYNANPRPDALMKEQLVEMTGLSPRVIRVWFQNKRCKDKKRS). A compositionally biased stretch (low complexity) spans 325 to 335 (ESGSLGNSSGS). Residues 325–358 (ESGSLGNSSGSDVTSLSSQLPDTPNSMVPSPVET) are disordered. The span at 336–358 (DVTSLSSQLPDTPNSMVPSPVET) shows a compositional bias: polar residues.

It is found in the nucleus. Binds to one of the cis-acting domain of the insulin gene enhancer. May be involved in the regional specification of the myotome and also in target recognition by the caudal primary neuron. The sequence is that of Insulin gene enhancer protein isl-2b (isl2b) from Danio rerio (Zebrafish).